The primary structure comprises 338 residues: MNVCAFSLALALVGSVSGQYYDYDIPLFMYGQISPNCAPECNCPHSYPTAMYCDDLKLKSVPMVPPGIKYLYLRNNQIDHIDEKAFENVTDLQWLILDHNLLENSKIKGKVFSKLKQLKKLHINYNNLTESVGPLPKSLQDLQLTNNKISKLGSFDGLVNLTFIYLQHNQLKEDAVSASLKGLKSLEYLDLSFNQMSKLPAGLPTSLLTLYLDNNKISNIPDEYFKRFTGLQYLRLSHNELADSGVPGNSFNISSLLELDLSYNKLKSIPTVNENLENYYLEVNELEKFDVKSFCKILGPLSYSKIKHLRLDGNPLTQSSLPPDMYECLRVANEITVN.

A signal peptide spans Met-1–Gly-18. The residue at position 19 (Gln-19) is a Pyrrolidone carboxylic acid. 4 positions are modified to sulfotyrosine: Tyr-20, Tyr-21, Tyr-23, and Tyr-30. In terms of domain architecture, LRRNT spans Phe-28–Pro-66. LRR repeat units follow at residues Gly-67–Asn-88, Asp-91–Lys-114, Gln-117–Lys-137, Ser-138–Val-159, Asn-160–Lys-181, Ser-185–Thr-205, Ser-206–Arg-227, and Gly-230–Ser-250. Asn-88 carries N-linked (GlcNAc...) (keratan sulfate) asparagine glycosylation. A glycan (N-linked (GlcNAc...) (keratan sulfate) asparagine) is linked at Asn-127. Asn-160 carries an N-linked (GlcNAc...) (keratan sulfate) asparagine glycan. Residue Asn-252 is glycosylated (N-linked (GlcNAc...) (keratan sulfate) asparagine). 2 LRR repeats span residues Ser-255–Leu-276 and Glu-277–Lys-296. The cysteines at positions 295 and 328 are disulfide-linked. Position 304 is a phosphoserine (Ser-304). The LRR 11 repeat unit spans residues Lys-305–Tyr-326.

The protein belongs to the small leucine-rich proteoglycan (SLRP) family. SLRP class II subfamily. Binds to laminin. Contains keratan sulfate. Post-translationally, cys-37, Cys-41, Cys-43 and Cys-53 are involved in disulfide bonds. As to expression, cornea and other tissues.

Its subcellular location is the secreted. It localises to the extracellular space. The protein localises to the extracellular matrix. In Mus musculus (Mouse), this protein is Lumican (Lum).